The primary structure comprises 134 residues: ATP synthase epsilon chain, chloroplastic (134 aa).

The protein belongs to the ATPase epsilon chain family. F-type ATPases have 2 components, CF(1) - the catalytic core - and CF(0) - the membrane proton channel. CF(1) has five subunits: alpha(3), beta(3), gamma(1), delta(1), epsilon(1). CF(0) has three main subunits: a, b and c.

It localises to the plastid. It is found in the chloroplast thylakoid membrane. Produces ATP from ADP in the presence of a proton gradient across the membrane. In Liriodendron tulipifera (Tuliptree), this protein is ATP synthase epsilon chain, chloroplastic.